The chain runs to 89 residues: Small ribosomal subunit protein uS15 (89 aa).

Belongs to the universal ribosomal protein uS15 family. In terms of assembly, part of the 30S ribosomal subunit. Forms a bridge to the 50S subunit in the 70S ribosome, contacting the 23S rRNA.

Functionally, one of the primary rRNA binding proteins, it binds directly to 16S rRNA where it helps nucleate assembly of the platform of the 30S subunit by binding and bridging several RNA helices of the 16S rRNA. In terms of biological role, forms an intersubunit bridge (bridge B4) with the 23S rRNA of the 50S subunit in the ribosome. The polypeptide is Small ribosomal subunit protein uS15 (Anoxybacillus flavithermus (strain DSM 21510 / WK1)).